A 96-amino-acid polypeptide reads, in one-letter code: UPF0235 protein VIBHAR_03581 (96 aa).

Belongs to the UPF0235 family.

The polypeptide is UPF0235 protein VIBHAR_03581 (Vibrio campbellii (strain ATCC BAA-1116)).